A 130-amino-acid polypeptide reads, in one-letter code: Small ribosomal subunit protein uS8 (130 aa).

This sequence belongs to the universal ribosomal protein uS8 family. As to quaternary structure, part of the 30S ribosomal subunit. Contacts proteins S5 and S12.

Its function is as follows. One of the primary rRNA binding proteins, it binds directly to 16S rRNA central domain where it helps coordinate assembly of the platform of the 30S subunit. The polypeptide is Small ribosomal subunit protein uS8 (Pseudomonas aeruginosa (strain UCBPP-PA14)).